Reading from the N-terminus, the 427-residue chain is Imidazolonepropionase (427 aa).

Fe(3+) contacts are provided by H81 and H83. Positions 81 and 83 each coordinate Zn(2+). 4-imidazolone-5-propanoate contacts are provided by R90, Y153, and H186. Y153 is a binding site for N-formimidoyl-L-glutamate. H260 contacts Fe(3+). H260 lines the Zn(2+) pocket. Residue E263 coordinates 4-imidazolone-5-propanoate. Position 335 (D335) interacts with Fe(3+). D335 contacts Zn(2+). 2 residues coordinate N-formimidoyl-L-glutamate: N337 and G339. S340 provides a ligand contact to 4-imidazolone-5-propanoate.

Belongs to the metallo-dependent hydrolases superfamily. HutI family. Zn(2+) serves as cofactor. It depends on Fe(3+) as a cofactor.

The protein resides in the cytoplasm. It carries out the reaction 4-imidazolone-5-propanoate + H2O = N-formimidoyl-L-glutamate. It participates in amino-acid degradation; L-histidine degradation into L-glutamate; N-formimidoyl-L-glutamate from L-histidine: step 3/3. Its function is as follows. Catalyzes the hydrolytic cleavage of the carbon-nitrogen bond in imidazolone-5-propanoate to yield N-formimidoyl-L-glutamate. It is the third step in the universal histidine degradation pathway. This is Imidazolonepropionase from Chloroflexus aggregans (strain MD-66 / DSM 9485).